A 253-amino-acid polypeptide reads, in one-letter code: Ribosomal RNA small subunit methyltransferase I (253 aa).

The segment covering 230–246 (RKEQRSQRSFSKGDKKP) has biased composition (basic and acidic residues). Positions 230-253 (RKEQRSQRSFSKGDKKPSFKRFKK) are disordered.

The protein belongs to the methyltransferase superfamily. RsmI family.

The protein localises to the cytoplasm. It catalyses the reaction cytidine(1402) in 16S rRNA + S-adenosyl-L-methionine = 2'-O-methylcytidine(1402) in 16S rRNA + S-adenosyl-L-homocysteine + H(+). In terms of biological role, catalyzes the 2'-O-methylation of the ribose of cytidine 1402 (C1402) in 16S rRNA. This chain is Ribosomal RNA small subunit methyltransferase I, found in Leptospira borgpetersenii serovar Hardjo-bovis (strain L550).